The following is a 408-amino-acid chain: Phosphopentomutase (408 aa).

Asp-10, Asp-307, His-312, Asp-348, His-349, and His-360 together coordinate Mn(2+).

The protein belongs to the phosphopentomutase family. Requires Mn(2+) as cofactor.

The protein localises to the cytoplasm. The enzyme catalyses 2-deoxy-alpha-D-ribose 1-phosphate = 2-deoxy-D-ribose 5-phosphate. It carries out the reaction alpha-D-ribose 1-phosphate = D-ribose 5-phosphate. It functions in the pathway carbohydrate degradation; 2-deoxy-D-ribose 1-phosphate degradation; D-glyceraldehyde 3-phosphate and acetaldehyde from 2-deoxy-alpha-D-ribose 1-phosphate: step 1/2. In terms of biological role, isomerase that catalyzes the conversion of deoxy-ribose 1-phosphate (dRib-1-P) and ribose 1-phosphate (Rib-1-P) to deoxy-ribose 5-phosphate (dRib-5-P) and ribose 5-phosphate (Rib-5-P), respectively. The protein is Phosphopentomutase of Proteus mirabilis (strain HI4320).